The chain runs to 518 residues: Subtilisin-like serine protease Cla h 9.0101 (518 aa).

Positions 1–16 (MRGALAGLSLATLATA) are cleaved as a signal peptide. A propeptide spans 17–138 (SPVLVNSIHN…ERDQEVHVLG (122 aa)) (removed in mature form). Residues 44–136 (YMIKFKDHVT…LVERDQEVHV (93 aa)) form the Inhibitor I9 domain. The Peptidase S8 domain occupies 148–454 (PWGLARISHR…GGESNYSAIV (307 aa)). Catalysis depends on charge relay system residues D184 and H216. The tract at residues 244 to 298 (RSNGSGSMSDVVKGVEYAAESHLEQVSITKKGKRKGFKGSTANMSLGGGKSPILD) is igE-binding. N-linked (GlcNAc...) asparagine glycans are attached at residues N246 and N286. S382 (charge relay system) is an active-site residue. An N-linked (GlcNAc...) asparagine glycan is attached at N449. Residues 460–518 (KATHRPTMLEEIESEAKVASKKVYSEGDELAHKVAELTEKVEDLIAGELKDMFRELKRE) constitute a propeptide, removed in mature form.

This sequence belongs to the peptidase S8 family.

Its function is as follows. Serine protease. This Davidiella tassiana (Mycosphaerella tassiana) protein is Subtilisin-like serine protease Cla h 9.0101.